A 282-amino-acid polypeptide reads, in one-letter code: 4-diphosphocytidyl-2-C-methyl-D-erythritol kinase (282 aa).

Lys13 is an active-site residue. Pro96–Ser106 serves as a coordination point for ATP. Asp138 is a catalytic residue.

The protein belongs to the GHMP kinase family. IspE subfamily.

The catalysed reaction is 4-CDP-2-C-methyl-D-erythritol + ATP = 4-CDP-2-C-methyl-D-erythritol 2-phosphate + ADP + H(+). It participates in isoprenoid biosynthesis; isopentenyl diphosphate biosynthesis via DXP pathway; isopentenyl diphosphate from 1-deoxy-D-xylulose 5-phosphate: step 3/6. Functionally, catalyzes the phosphorylation of the position 2 hydroxy group of 4-diphosphocytidyl-2C-methyl-D-erythritol. The protein is 4-diphosphocytidyl-2-C-methyl-D-erythritol kinase of Pseudomonas syringae pv. syringae (strain B728a).